The chain runs to 226 residues: ATP-dependent dethiobiotin synthetase BioD (226 aa).

13–18 (DVGKTV) provides a ligand contact to ATP. Residue Thr17 coordinates Mg(2+). The active site involves Lys38. Residues Asp55, 116 to 119 (EGAG), and 176 to 177 (NR) each bind ATP. Mg(2+) is bound by residues Asp55 and Glu116.

It belongs to the dethiobiotin synthetase family. As to quaternary structure, homodimer. Mg(2+) is required as a cofactor.

It localises to the cytoplasm. It carries out the reaction (7R,8S)-7,8-diammoniononanoate + CO2 + ATP = (4R,5S)-dethiobiotin + ADP + phosphate + 3 H(+). It functions in the pathway cofactor biosynthesis; biotin biosynthesis; biotin from 7,8-diaminononanoate: step 1/2. Functionally, catalyzes a mechanistically unusual reaction, the ATP-dependent insertion of CO2 between the N7 and N8 nitrogen atoms of 7,8-diaminopelargonic acid (DAPA, also called 7,8-diammoniononanoate) to form a ureido ring. This chain is ATP-dependent dethiobiotin synthetase BioD, found in Aliivibrio fischeri (strain MJ11) (Vibrio fischeri).